Consider the following 210-residue polypeptide: ATP-dependent Clp protease proteolytic subunit 1 (210 aa).

The active-site Nucleophile is the S106. H131 is an active-site residue.

This sequence belongs to the peptidase S14 family. As to quaternary structure, fourteen ClpP subunits assemble into 2 heptameric rings which stack back to back to give a disk-like structure with a central cavity, resembling the structure of eukaryotic proteasomes.

Its subcellular location is the cytoplasm. It catalyses the reaction Hydrolysis of proteins to small peptides in the presence of ATP and magnesium. alpha-casein is the usual test substrate. In the absence of ATP, only oligopeptides shorter than five residues are hydrolyzed (such as succinyl-Leu-Tyr-|-NHMec, and Leu-Tyr-Leu-|-Tyr-Trp, in which cleavage of the -Tyr-|-Leu- and -Tyr-|-Trp bonds also occurs).. Cleaves peptides in various proteins in a process that requires ATP hydrolysis. Has a chymotrypsin-like activity. Plays a major role in the degradation of misfolded proteins. This chain is ATP-dependent Clp protease proteolytic subunit 1, found in Chelativorans sp. (strain BNC1).